The following is a 146-amino-acid chain: Aminoglycoside N(6')-acetyltransferase type 1 (146 aa).

Residues 1 to 146 (MIVICDHDNL…RVVFYRKTLG (146 aa)) form the N-acetyltransferase domain. Residues Trp21, Tyr66, Glu79, and Asp115 each coordinate substrate. Asn120 is a binding site for acetyl-CoA. Glu136 contributes to the substrate binding site.

In terms of assembly, homodimer.

It carries out the reaction kanamycin B + acetyl-CoA = N(6')-acetylkanamycin B + CoA + H(+). Functionally, catalyzes the transfer of an acetyl group from acetyl-CoA to the 6'-amino group of aminoglycoside molecules conferring resistance to antibiotics containing the purpurosamine ring including amikacin, tobramycin, netilmicin, isepamicin and sisomicin. The chain is Aminoglycoside N(6')-acetyltransferase type 1 from Serratia marcescens.